The following is a 147-amino-acid chain: Nucleoside diphosphate kinase (147 aa).

ATP is bound by residues lysine 9, phenylalanine 57, arginine 85, threonine 91, arginine 102, and asparagine 112. Histidine 115 acts as the Pros-phosphohistidine intermediate in catalysis.

It belongs to the NDK family. Homotetramer. The cofactor is Mg(2+).

It is found in the cytoplasm. The catalysed reaction is a 2'-deoxyribonucleoside 5'-diphosphate + ATP = a 2'-deoxyribonucleoside 5'-triphosphate + ADP. It carries out the reaction a ribonucleoside 5'-diphosphate + ATP = a ribonucleoside 5'-triphosphate + ADP. Major role in the synthesis of nucleoside triphosphates other than ATP. The ATP gamma phosphate is transferred to the NDP beta phosphate via a ping-pong mechanism, using a phosphorylated active-site intermediate. The sequence is that of Nucleoside diphosphate kinase from Fervidobacterium nodosum (strain ATCC 35602 / DSM 5306 / Rt17-B1).